Here is a 227-residue protein sequence, read N- to C-terminus: Cytochrome c oxidase subunit 2 (227 aa).

Residues methionine 1–serine 14 are Mitochondrial intermembrane-facing. The helical transmembrane segment at proline 15–methionine 45 threads the bilayer. The Mitochondrial matrix portion of the chain corresponds to leucine 46–glutamine 59. The chain crosses the membrane as a helical span at residues glutamate 60 to methionine 87. The Mitochondrial intermembrane portion of the chain corresponds to aspartate 88–leucine 227. Cu cation is bound by residues histidine 161, cysteine 196, glutamate 198, cysteine 200, histidine 204, and methionine 207. Glutamate 198 is a Mg(2+) binding site.

Belongs to the cytochrome c oxidase subunit 2 family. As to quaternary structure, component of the cytochrome c oxidase (complex IV, CIV), a multisubunit enzyme composed of 14 subunits. The complex is composed of a catalytic core of 3 subunits MT-CO1, MT-CO2 and MT-CO3, encoded in the mitochondrial DNA, and 11 supernumerary subunits COX4I, COX5A, COX5B, COX6A, COX6B, COX6C, COX7A, COX7B, COX7C, COX8 and NDUFA4, which are encoded in the nuclear genome. The complex exists as a monomer or a dimer and forms supercomplexes (SCs) in the inner mitochondrial membrane with NADH-ubiquinone oxidoreductase (complex I, CI) and ubiquinol-cytochrome c oxidoreductase (cytochrome b-c1 complex, complex III, CIII), resulting in different assemblies (supercomplex SCI(1)III(2)IV(1) and megacomplex MCI(2)III(2)IV(2)). Found in a complex with TMEM177, COA6, COX18, COX20, SCO1 and SCO2. Interacts with TMEM177 in a COX20-dependent manner. Interacts with COX20. Interacts with COX16. Requires Cu cation as cofactor.

Its subcellular location is the mitochondrion inner membrane. It catalyses the reaction 4 Fe(II)-[cytochrome c] + O2 + 8 H(+)(in) = 4 Fe(III)-[cytochrome c] + 2 H2O + 4 H(+)(out). Functionally, component of the cytochrome c oxidase, the last enzyme in the mitochondrial electron transport chain which drives oxidative phosphorylation. The respiratory chain contains 3 multisubunit complexes succinate dehydrogenase (complex II, CII), ubiquinol-cytochrome c oxidoreductase (cytochrome b-c1 complex, complex III, CIII) and cytochrome c oxidase (complex IV, CIV), that cooperate to transfer electrons derived from NADH and succinate to molecular oxygen, creating an electrochemical gradient over the inner membrane that drives transmembrane transport and the ATP synthase. Cytochrome c oxidase is the component of the respiratory chain that catalyzes the reduction of oxygen to water. Electrons originating from reduced cytochrome c in the intermembrane space (IMS) are transferred via the dinuclear copper A center (CU(A)) of subunit 2 and heme A of subunit 1 to the active site in subunit 1, a binuclear center (BNC) formed by heme A3 and copper B (CU(B)). The BNC reduces molecular oxygen to 2 water molecules using 4 electrons from cytochrome c in the IMS and 4 protons from the mitochondrial matrix. The chain is Cytochrome c oxidase subunit 2 (MT-CO2) from Gazella spekei (Speke's gazelle).